A 211-amino-acid chain; its full sequence is Beta-crystallin B3 (211 aa).

Residue M1 is modified to N-acetylmethionine. An N-acetylalanine; in Beta-crystallin B3, N-terminally processed modification is found at A2. The segment at A2–S23 is N-terminal arm. Beta/gamma crystallin 'Greek key' domains lie at Y24–S63 and G64–H108. The segment at I109 to D113 is connecting peptide. 2 consecutive Beta/gamma crystallin 'Greek key' domains span residues H114–N155 and G156–R198. A C-terminal arm region spans residues Q200 to S211.

This sequence belongs to the beta/gamma-crystallin family. As to quaternary structure, homo/heterodimer, or complexes of higher-order. The structure of beta-crystallin oligomers seems to be stabilized through interactions between the N-terminal arms.

In terms of biological role, crystallins are the dominant structural components of the vertebrate eye lens. The protein is Beta-crystallin B3 (Crybb3) of Rattus norvegicus (Rat).